Here is a 291-residue protein sequence, read N- to C-terminus: Ribosomal protein L11 methyltransferase (291 aa).

Residues Thr-136, Gly-159, Asp-181, and Asn-228 each coordinate S-adenosyl-L-methionine.

This sequence belongs to the methyltransferase superfamily. PrmA family.

It is found in the cytoplasm. It carries out the reaction L-lysyl-[protein] + 3 S-adenosyl-L-methionine = N(6),N(6),N(6)-trimethyl-L-lysyl-[protein] + 3 S-adenosyl-L-homocysteine + 3 H(+). Functionally, methylates ribosomal protein L11. This Rhizobium meliloti (strain 1021) (Ensifer meliloti) protein is Ribosomal protein L11 methyltransferase.